Consider the following 195-residue polypeptide: Thymidine kinase (195 aa).

ATP-binding positions include 15–22 and 88–91; these read GSMFSGKS and DEVQ. E89 acts as the Proton acceptor in catalysis. Zn(2+)-binding residues include C145, C148, C183, and C186.

It belongs to the thymidine kinase family. In terms of assembly, homotetramer.

The protein localises to the cytoplasm. It catalyses the reaction thymidine + ATP = dTMP + ADP + H(+). This is Thymidine kinase from Bacillus cereus (strain 03BB102).